The primary structure comprises 674 residues: MEPIDDILFEVTDAFKTQKEDLLELVTLIDIYGEQVNQEGSYEEKTRFIETLNTLLEDNPSTTGEIGWDLPKGLLKFLSKDNVDVNGRLGTNMIVQGVMKCFYAISIQGEPKKCLITGLELLSSLCSKDFSKSDQQNKEDFVDKKANTLPPEGVIENSSNRKDFPSYGESKSSNEFFLKLKSYILFEFIGASLKRISTLFPSKYLGAAVSTIEKFVYSHADTFEDALFLLRRVYTFCRNYIPPDPPKDIQLNEDFTREMFDKVVEEESELQVRLLRRLCTFGISTPIKTVTTNADVKYYCALNQQKFELSAYYTEYLELFCRYYQMAFSLDVDIEGEFQNVIKECRIIYKSVPQEISAVNDEAKLVLERMVYKLAYTFEVQKAAKEKNVGLDYNGVILFSGIHYLETNQHLVKEMNITDAIYLYLRFTTPSLYSKVYYNVAVESVSRYWLWYAITTEPLEDVKKELKNLSVFVTKTLLHVLLQKNCIQVNQQLRMITFTLLTRLLCLIPEKVAFEFILDVLKTSPLPLAKTSVLCVFKDLSRRRISTKDNDSETDLIVEKLSKLKVNDSNKAQQSNIRHYIQLDSSKMKAVHDCCLQTIQDSFTADAKKSDILLLLTYLNIFIVLKKTWDEDLLKIVCSKIDSNLKSVEPDKLPKYKEIVDKNESLNDYFTGIK.

It belongs to the YBP1 family. As to quaternary structure, interacts with YAP1. Forms a peroxide stress induced complex with YAP1 in the cytoplasm. Systematic proteome-wide 2-hybrid interaction studies suggest that YAP1, HYR1/GPX3, and YBP1 all interact with the nuclear pore complex subunit NUP116, which is involved in nucleocytoplasmic transport.

The protein resides in the cytoplasm. In terms of biological role, involved in oxidative stress response and redox homeostasis. Required for hydrogen peroxide-induced oxidation and nuclear localization (activation) of YAP1. Functions probably in concert with HYP1/GPX3, the actual YAP1 modifying enzyme. YBP1 is not required for HYP1/GPX3-independent, diamide-induced oxidation of YAP1. This chain is YAP1-binding protein 1, found in Saccharomyces cerevisiae (strain ATCC 204508 / S288c) (Baker's yeast).